The sequence spans 646 residues: Chaperone protein DnaK (646 aa).

A Phosphothreonine; by autocatalysis modification is found at Thr-197. The disordered stretch occupies residues 599-646 (QQGAQAGADPNAGSSQGAQAGTDYGTSGPKTGTADDVDYEVVNDDNDK). The segment covering 610-628 (AGSSQGAQAGTDYGTSGPK) has biased composition (polar residues). Acidic residues predominate over residues 633 to 646 (DDVDYEVVNDDNDK).

It belongs to the heat shock protein 70 family.

In terms of biological role, acts as a chaperone. This is Chaperone protein DnaK from Treponema denticola (strain ATCC 35405 / DSM 14222 / CIP 103919 / JCM 8153 / KCTC 15104).